A 139-amino-acid polypeptide reads, in one-letter code: Gonadotropin subunit beta-2 (139 aa).

The N-terminal stretch at 1-24 (MFPLVLSLFLGATSDIWPLAPAEA) is a signal peptide. 6 disulfide bridges follow: Cys30–Cys78, Cys44–Cys93, Cys47–Cys131, Cys55–Cys109, Cys59–Cys111, and Cys114–Cys121. Asn34 carries N-linked (GlcNAc...) asparagine glycosylation.

The protein belongs to the glycoprotein hormones subunit beta family. Heterodimer of an alpha and a beta chain.

The protein localises to the secreted. In terms of biological role, involved in gametogenesis and steroidogenesis. This chain is Gonadotropin subunit beta-2 (cgbb), found in Morone saxatilis (Striped bass).